We begin with the raw amino-acid sequence, 92 residues long: MPRSLKKGPFVDHHLLKKVFEAQESNSKKPIKTWSRRSLIVPDMIGLTIAVHNGQQHVPVLMTEEMVGHKLGEFAVTRNYRGHAADKKAKKK.

This sequence belongs to the universal ribosomal protein uS19 family.

Functionally, protein S19 forms a complex with S13 that binds strongly to the 16S ribosomal RNA. This Francisella philomiragia subsp. philomiragia (strain ATCC 25017 / CCUG 19701 / FSC 153 / O#319-036) protein is Small ribosomal subunit protein uS19.